Here is an 810-residue protein sequence, read N- to C-terminus: Cell division control protein 48 homolog E (810 aa).

Serine 2 bears the N-acetylserine mark. Serine 41 carries the post-translational modification Phosphoserine. Residues 248–255 (GPPGSGKT) and 521–528 (GPPGCGKT) contribute to the ATP site.

Belongs to the AAA ATPase family.

It is found in the nucleus. The protein resides in the cytoplasm. Its subcellular location is the cytoskeleton. It localises to the phragmoplast. Its function is as follows. Probably functions in cell division and growth processes. Interacts with certain SNAREs as part of specialized membrane fusion events where vesicles from the same organelle fuse (homotypic fusion). In Arabidopsis thaliana (Mouse-ear cress), this protein is Cell division control protein 48 homolog E (CDC48E).